A 1030-amino-acid chain; its full sequence is Halotolerance protein 9 (1030 aa).

A DNA-binding region (zn(2)-C6 fungal-type) is located at residues cysteine 136–cysteine 166. The tract at residues histidine 185–valine 208 is disordered. A compositionally biased stretch (low complexity) spans serine 196–valine 208. Phosphoserine occurs at positions 221 and 937.

It localises to the cytoplasm. The protein localises to the nucleus. Its function is as follows. Putative transcription factor involved in halotolerance. The protein is Halotolerance protein 9 (HAL9) of Saccharomyces cerevisiae (strain ATCC 204508 / S288c) (Baker's yeast).